We begin with the raw amino-acid sequence, 2648 residues long: E3 ubiquitin-protein ligase hecd-1 (2648 aa).

ANK repeat units lie at residues 374-403 and 405-434; these read VGQSLTNWASAFGSIEMVQYLCDKGSDVNK and HKSSSLHYAACFGRPDVVKLLLQRGANPDL. Basic and acidic residues predominate over residues 433-455; the sequence is DLRDEDGKTALDKARERSDDDHN. Disordered stretches follow at residues 433–494, 645–714, and 1376–1400; these read DLRD…ELPN, PMEI…KATA, and DPPKKDSPAGTSSTPGSSSSAALPP. Polar residues-rich tracts occupy residues 478–489, 652–661, and 670–688; these read ASTSKQPGTSTK, NQPSSSTAVP, and TVPSSSGGADAESNSNPST. Low complexity-rich tracts occupy residues 696–714 and 1383–1400; these read SSTPSSSTQQSISKPKATA and PAGTSSTPGSSSSAALPP. The region spanning 1438-1510 is the MIB/HERC2 domain; that stretch reads RSRGSYKISE…NFDIERVTST (73 aa). Disordered regions lie at residues 1538 to 1562, 1575 to 1629, 1652 to 1796, and 1811 to 1836; these read YTPKTTGGPPSSSVFGTSSSAGSSR, KNTT…SLQH, NQEP…LLGG, and ESLSDASSSAKDATTNEAQKKGGKKP. 2 stretches are compositionally biased toward low complexity: residues 1543–1562 and 1575–1586; these read TGGPPSSSVFGTSSSAGSSR and KNTTPAGTPSSG. Positions 1610–1629 are enriched in polar residues; sequence TSGPSVASTGQAASAESLQH. Positions 1653-1666 are enriched in acidic residues; sequence QEPEDEPMGGEESD. Low complexity predominate over residues 1667–1696; the sequence is SAASMRSAASSNSQMSMGSSSQQQQQQDSD. Composition is skewed to acidic residues over residues 1736 to 1746 and 1756 to 1783; these read TDGDADADETN and DAMEEDDEEEETMEDEEDDDDDDDDESS. Low complexity predominate over residues 1812–1823; it reads SLSDASSSAKDA. The HECT domain maps to 2240-2648; the sequence is FHADRKAVLE…AINEKGFHLN (409 aa). Cys2617 (glycyl thioester intermediate) is an active-site residue.

This sequence belongs to the UPL family. K-HECT subfamily. Expressed in most tissues, including hypodermis, muscle, intestine, vulva, and neurons.

It catalyses the reaction S-ubiquitinyl-[E2 ubiquitin-conjugating enzyme]-L-cysteine + [acceptor protein]-L-lysine = [E2 ubiquitin-conjugating enzyme]-L-cysteine + N(6)-ubiquitinyl-[acceptor protein]-L-lysine.. It participates in protein modification; protein ubiquitination. E3 ubiquitin-protein ligase which accepts ubiquitin from an E2 ubiquitin-conjugating enzyme in the form of a thioester and then directly transfers the ubiquitin to targeted substrates. Involved in the ubiquitination and proteasomal-mediated degradation of cytoplasmic and mitochondrial proteins. Positively regulates lin-12 activity in the anchor cell (AC)/vulval precursor (VU) cell fate decision. Negatively regulates glp-1 activity in germline proliferation. May play a role in the formation of fibrous organelles, a hemidesmosome-like structure attaching muscles to the epidermis. Regulates germline DNA double-strand-break repair and apoptosis in response to DNA damage by recruiting E4 ubiquitin-protein ligase ufd-2 to DNA repair foci. This is E3 ubiquitin-protein ligase hecd-1 from Caenorhabditis elegans.